The primary structure comprises 340 residues: Protein RecA (340 aa).

67 to 74 (GNESSGKT) lines the ATP pocket.

This sequence belongs to the RecA family.

It localises to the cytoplasm. Can catalyze the hydrolysis of ATP in the presence of single-stranded DNA, the ATP-dependent uptake of single-stranded DNA by duplex DNA, and the ATP-dependent hybridization of homologous single-stranded DNAs. It interacts with LexA causing its activation and leading to its autocatalytic cleavage. This chain is Protein RecA, found in Mycoplasma genitalium (strain ATCC 33530 / DSM 19775 / NCTC 10195 / G37) (Mycoplasmoides genitalium).